The primary structure comprises 268 residues: WUSCHEL-related homeobox 12 (268 aa).

Polar residues predominate over residues 1 to 16 (MNQEGASHSPSSTSTE). Disordered regions lie at residues 1–22 (MNQE…RARW) and 173–198 (SDHN…QNSN). The homeobox; WUS-type DNA-binding region spans 17–81 (PVRARWSPKP…NRRSRSRRRH (65 aa)).

Belongs to the WUS homeobox family.

Its subcellular location is the nucleus. Its function is as follows. Transcription factor which may be involved in developmental processes. In Arabidopsis thaliana (Mouse-ear cress), this protein is WUSCHEL-related homeobox 12 (WOX12).